A 243-amino-acid polypeptide reads, in one-letter code: uncharacterized protein (243 aa).

4 helical membrane passes run 38 to 58 (AYFL…VGIF), 99 to 119 (FGIA…FLGY), 143 to 163 (FYFS…FLVL), and 204 to 224 (AFAT…LGLF).

It localises to the cell membrane. This is an uncharacterized protein from Mycoplasma pneumoniae (strain ATCC 29342 / M129 / Subtype 1) (Mycoplasmoides pneumoniae).